Consider the following 109-residue polypeptide: Thiosulfate sulfurtransferase GlpE (109 aa).

Residues 17–105 (KEGKTALVDI…WARSYPQDIT (89 aa)) enclose the Rhodanese domain. The Cysteine persulfide intermediate role is filled by cysteine 65.

It belongs to the GlpE family.

Its subcellular location is the cytoplasm. It carries out the reaction thiosulfate + hydrogen cyanide = thiocyanate + sulfite + 2 H(+). The enzyme catalyses thiosulfate + [thioredoxin]-dithiol = [thioredoxin]-disulfide + hydrogen sulfide + sulfite + 2 H(+). In terms of biological role, transferase that catalyzes the transfer of sulfur from thiosulfate to thiophilic acceptors such as cyanide or dithiols. May function in a CysM-independent thiosulfate assimilation pathway by catalyzing the conversion of thiosulfate to sulfite, which can then be used for L-cysteine biosynthesis. The chain is Thiosulfate sulfurtransferase GlpE from Yersinia pestis.